Reading from the N-terminus, the 84-residue chain is Cell division topological specificity factor (84 aa).

It belongs to the MinE family.

Prevents the cell division inhibition by proteins MinC and MinD at internal division sites while permitting inhibition at polar sites. This ensures cell division at the proper site by restricting the formation of a division septum at the midpoint of the long axis of the cell. This is Cell division topological specificity factor from Pseudomonas fluorescens (strain Pf0-1).